Consider the following 152-residue polypeptide: Putative aluminum-activated malate transporter 11 (152 aa).

2 helical membrane passes run 48–68 (VIHAFKVGHSLTLVSLLYFME) and 78–98 (AIWAVMTVVAVLLEFFAVEGL).

It belongs to the aromatic acid exporter (TC 2.A.85) family.

The protein localises to the membrane. Functionally, malate transporter. In Arabidopsis thaliana (Mouse-ear cress), this protein is Putative aluminum-activated malate transporter 11 (ALMT11).